The sequence spans 247 residues: Carboxy-S-adenosyl-L-methionine synthase (247 aa).

S-adenosyl-L-methionine is bound by residues Tyr-39, 64-66, 89-90, 117-118, Asn-132, and Arg-199; these read GCS, DN, and DI.

It belongs to the class I-like SAM-binding methyltransferase superfamily. Cx-SAM synthase family. In terms of assembly, homodimer.

It carries out the reaction prephenate + S-adenosyl-L-methionine = carboxy-S-adenosyl-L-methionine + 3-phenylpyruvate + H2O. In terms of biological role, catalyzes the conversion of S-adenosyl-L-methionine (SAM) to carboxy-S-adenosyl-L-methionine (Cx-SAM). The protein is Carboxy-S-adenosyl-L-methionine synthase of Escherichia coli (strain K12 / MC4100 / BW2952).